Consider the following 338-residue polypeptide: MPGNGPAPAARGLRAAWRHRGPLACALLPLSLLYRALLGLHRLPYALGFRRAGQAGIPVIVVGNVIAGGAGKTPVTLALARHLRDSGWSPGIVSRGYGRSTDDCREATPESAPADVGDEPALLARASGVPVFVARKRIEAVQALRARHSQVDVVISDDGLQHLALARDIELCVFNDDGIGNGWLLPAGPLREPWPRPVTAVLHAGACPPTDAPAFAMQRQLAAEGVNAHGERIPLAALRGRPVEAVAAVARPEGFFSMLASEQDLALEHAQALPDHYNFESFQRLGRNEDPLVCTEKDAVKLWRTHPQAWSVALQLQLPPDFWALLDQRLQALRRPRA.

Residue 66–73 (IAGGAGKT) participates in ATP binding.

It belongs to the LpxK family.

The catalysed reaction is a lipid A disaccharide + ATP = a lipid IVA + ADP + H(+). The protein operates within glycolipid biosynthesis; lipid IV(A) biosynthesis; lipid IV(A) from (3R)-3-hydroxytetradecanoyl-[acyl-carrier-protein] and UDP-N-acetyl-alpha-D-glucosamine: step 6/6. Transfers the gamma-phosphate of ATP to the 4'-position of a tetraacyldisaccharide 1-phosphate intermediate (termed DS-1-P) to form tetraacyldisaccharide 1,4'-bis-phosphate (lipid IVA). The polypeptide is Tetraacyldisaccharide 4'-kinase (Delftia acidovorans (strain DSM 14801 / SPH-1)).